A 221-amino-acid chain; its full sequence is FMN-dependent NADH:quinone oxidoreductase 1 (221 aa).

FMN contacts are provided by residues 17–19 (SAS) and 148–151 (SSGG).

It belongs to the azoreductase type 1 family. Homodimer. Requires FMN as cofactor.

The catalysed reaction is 2 a quinone + NADH + H(+) = 2 a 1,4-benzosemiquinone + NAD(+). The enzyme catalyses N,N-dimethyl-1,4-phenylenediamine + anthranilate + 2 NAD(+) = 2-(4-dimethylaminophenyl)diazenylbenzoate + 2 NADH + 2 H(+). Its function is as follows. Quinone reductase that provides resistance to thiol-specific stress caused by electrophilic quinones. Also exhibits azoreductase activity. Catalyzes the reductive cleavage of the azo bond in aromatic azo compounds to the corresponding amines. In Clostridium acetobutylicum (strain ATCC 824 / DSM 792 / JCM 1419 / IAM 19013 / LMG 5710 / NBRC 13948 / NRRL B-527 / VKM B-1787 / 2291 / W), this protein is FMN-dependent NADH:quinone oxidoreductase 1.